A 274-amino-acid polypeptide reads, in one-letter code: Acetyl-coenzyme A carboxylase carboxyl transferase subunit beta (274 aa).

The region spanning 16 to 274 is the CoA carboxyltransferase N-terminal domain; the sequence is LWTKCEECKN…LLNLLFYKNA (259 aa). Zn(2+) is bound by residues C20, C23, C39, and C42. A C4-type zinc finger spans residues 20–42; the sequence is CEECKNILLAQELETNFYVCPKC.

Belongs to the AccD/PCCB family. In terms of assembly, acetyl-CoA carboxylase is a heterohexamer composed of biotin carboxyl carrier protein (AccB), biotin carboxylase (AccC) and two subunits each of ACCase subunit alpha (AccA) and ACCase subunit beta (AccD). The cofactor is Zn(2+).

It localises to the cytoplasm. It catalyses the reaction N(6)-carboxybiotinyl-L-lysyl-[protein] + acetyl-CoA = N(6)-biotinyl-L-lysyl-[protein] + malonyl-CoA. The protein operates within lipid metabolism; malonyl-CoA biosynthesis; malonyl-CoA from acetyl-CoA: step 1/1. Component of the acetyl coenzyme A carboxylase (ACC) complex. Biotin carboxylase (BC) catalyzes the carboxylation of biotin on its carrier protein (BCCP) and then the CO(2) group is transferred by the transcarboxylase to acetyl-CoA to form malonyl-CoA. The chain is Acetyl-coenzyme A carboxylase carboxyl transferase subunit beta from Hydrogenobaculum sp. (strain Y04AAS1).